The sequence spans 125 residues: Large ribosomal subunit protein bL12 (125 aa).

The interval 96-125 is disordered; sequence PAPVKEGATKDEAEEIKKKIEEAGGTAELK. A compositionally biased stretch (basic and acidic residues) spans 102-117; that stretch reads GATKDEAEEIKKKIEE.

This sequence belongs to the bacterial ribosomal protein bL12 family. In terms of assembly, homodimer. Part of the ribosomal stalk of the 50S ribosomal subunit. Forms a multimeric L10(L12)X complex, where L10 forms an elongated spine to which 2 to 4 L12 dimers bind in a sequential fashion. Binds GTP-bound translation factors.

Its function is as follows. Forms part of the ribosomal stalk which helps the ribosome interact with GTP-bound translation factors. Is thus essential for accurate translation. The polypeptide is Large ribosomal subunit protein bL12 (Alcanivorax borkumensis (strain ATCC 700651 / DSM 11573 / NCIMB 13689 / SK2)).